The chain runs to 466 residues: Asparagine--tRNA ligase (466 aa).

Belongs to the class-II aminoacyl-tRNA synthetase family. As to quaternary structure, homodimer.

The protein resides in the cytoplasm. The enzyme catalyses tRNA(Asn) + L-asparagine + ATP = L-asparaginyl-tRNA(Asn) + AMP + diphosphate + H(+). This Wigglesworthia glossinidia brevipalpis protein is Asparagine--tRNA ligase.